A 1813-amino-acid chain; its full sequence is Nonribosomal peptide synthetase 1 (1813 aa).

The segment at 89–494 is adenylation; the sequence is EKARRDPSRQ…GRGDQQVKLR (406 aa). Residues 624 to 699 enclose the Carrier 1 domain; that stretch reads EPQSERERQL…ELAITLKHSD (76 aa). O-(pantetheine 4'-phosphoryl)serine is present on Ser660. The tract at residues 738–1159 is condensation 1; the sequence is DVYPCTTLQE…LPMTDDELAE (422 aa). One can recognise a Carrier 2 domain in the interval 1282-1358; that stretch reads QVTTPKQQKL…DMADIAKESL (77 aa). Ser1319 is subject to O-(pantetheine 4'-phosphoryl)serine. The segment at 1427–1806 is condensation 2; the sequence is FYLDAAVDQS…STLFQTDVME (380 aa).

It belongs to the NRP synthetase family.

The protein operates within siderophore biosynthesis. Its function is as follows. Nonribosomal peptide synthetase; part of the gene cluster that mediates the biosynthesis of hydroxamate-containing siderophores that play a critical role in virulence via intracellular iron acquisition during macrophage infection. This is Nonribosomal peptide synthetase 1 from Ajellomyces capsulatus (Darling's disease fungus).